The following is a 203-amino-acid chain: Holliday junction branch migration complex subunit RuvA (203 aa).

Positions 1-64 (MIGRLRGIII…EDAQLLYGFN (64 aa)) are domain I. The domain II stretch occupies residues 65-142 (NKQERTLFKE…KGLHGDLFTP (78 aa)). The flexible linker stretch occupies residues 143 to 154 (AADLVLTSPASP). Residues 155–203 (ATDDAEQEAVAALVALGYKPQEASRMVSKIARPDASSETLIREALHAAL) form a domain III region.

The protein belongs to the RuvA family. In terms of assembly, homotetramer. Forms an RuvA(8)-RuvB(12)-Holliday junction (HJ) complex. HJ DNA is sandwiched between 2 RuvA tetramers; dsDNA enters through RuvA and exits via RuvB. An RuvB hexamer assembles on each DNA strand where it exits the tetramer. Each RuvB hexamer is contacted by two RuvA subunits (via domain III) on 2 adjacent RuvB subunits; this complex drives branch migration. In the full resolvosome a probable DNA-RuvA(4)-RuvB(12)-RuvC(2) complex forms which resolves the HJ.

It is found in the cytoplasm. Functionally, the RuvA-RuvB-RuvC complex processes Holliday junction (HJ) DNA during genetic recombination and DNA repair, while the RuvA-RuvB complex plays an important role in the rescue of blocked DNA replication forks via replication fork reversal (RFR). RuvA specifically binds to HJ cruciform DNA, conferring on it an open structure. The RuvB hexamer acts as an ATP-dependent pump, pulling dsDNA into and through the RuvAB complex. HJ branch migration allows RuvC to scan DNA until it finds its consensus sequence, where it cleaves and resolves the cruciform DNA. The sequence is that of Holliday junction branch migration complex subunit RuvA from Escherichia fergusonii (strain ATCC 35469 / DSM 13698 / CCUG 18766 / IAM 14443 / JCM 21226 / LMG 7866 / NBRC 102419 / NCTC 12128 / CDC 0568-73).